The chain runs to 812 residues: Phosphoenolpyruvate synthase (812 aa).

The active-site Tele-phosphohistidine intermediate is His-430. Substrate is bound by residues Arg-520, Arg-588, Glu-690, Gly-711, Ser-712, Asn-713, and Asp-714. Position 690 (Glu-690) interacts with Mg(2+). Residue Asp-714 coordinates Mg(2+). The active-site Proton donor is the Cys-761.

Belongs to the PEP-utilizing enzyme family. Mg(2+) is required as a cofactor.

The catalysed reaction is pyruvate + ATP + H2O = phosphoenolpyruvate + AMP + phosphate + 2 H(+). Its pathway is carbohydrate biosynthesis; gluconeogenesis. Its function is as follows. Catalyzes the phosphorylation of pyruvate to phosphoenolpyruvate. The chain is Phosphoenolpyruvate synthase (ppsA) from Helicobacter pylori (strain ATCC 700392 / 26695) (Campylobacter pylori).